Reading from the N-terminus, the 286-residue chain is Formamidopyrimidine-DNA glycosylase (286 aa).

Proline 2 functions as the Schiff-base intermediate with DNA in the catalytic mechanism. The active-site Proton donor is the glutamate 3. The Proton donor; for beta-elimination activity role is filled by lysine 61. Residues histidine 96, arginine 115, and lysine 161 each coordinate DNA. Residues 247–281 (EAYGREGEPCRRCGRAMRREAFMNRSSYFCPSCQR) form an FPG-type zinc finger. Arginine 271 serves as the catalytic Proton donor; for delta-elimination activity.

Belongs to the FPG family. In terms of assembly, monomer. It depends on Zn(2+) as a cofactor.

The catalysed reaction is Hydrolysis of DNA containing ring-opened 7-methylguanine residues, releasing 2,6-diamino-4-hydroxy-5-(N-methyl)formamidopyrimidine.. The enzyme catalyses 2'-deoxyribonucleotide-(2'-deoxyribose 5'-phosphate)-2'-deoxyribonucleotide-DNA = a 3'-end 2'-deoxyribonucleotide-(2,3-dehydro-2,3-deoxyribose 5'-phosphate)-DNA + a 5'-end 5'-phospho-2'-deoxyribonucleoside-DNA + H(+). Functionally, involved in base excision repair of DNA damaged by oxidation or by mutagenic agents. Acts as a DNA glycosylase that recognizes and removes damaged bases. Has a preference for oxidized purines, such as 7,8-dihydro-8-oxoguanine (8-oxoG). Has AP (apurinic/apyrimidinic) lyase activity and introduces nicks in the DNA strand. Cleaves the DNA backbone by beta-delta elimination to generate a single-strand break at the site of the removed base with both 3'- and 5'-phosphates. The chain is Formamidopyrimidine-DNA glycosylase from Mycobacteroides abscessus (strain ATCC 19977 / DSM 44196 / CCUG 20993 / CIP 104536 / JCM 13569 / NCTC 13031 / TMC 1543 / L948) (Mycobacterium abscessus).